The following is a 122-amino-acid chain: Small ribosomal subunit protein uS13 (122 aa).

The interval 97–122 (PVRGQRTHTNARTRKGPAKAIAGKKK) is disordered.

It belongs to the universal ribosomal protein uS13 family. As to quaternary structure, part of the 30S ribosomal subunit. Forms a loose heterodimer with protein S19. Forms two bridges to the 50S subunit in the 70S ribosome.

In terms of biological role, located at the top of the head of the 30S subunit, it contacts several helices of the 16S rRNA. In the 70S ribosome it contacts the 23S rRNA (bridge B1a) and protein L5 of the 50S subunit (bridge B1b), connecting the 2 subunits; these bridges are implicated in subunit movement. Contacts the tRNAs in the A and P-sites. The protein is Small ribosomal subunit protein uS13 of Rhizobium rhizogenes (strain K84 / ATCC BAA-868) (Agrobacterium radiobacter).